The primary structure comprises 95 residues: UPF0381 protein HI_0400 (95 aa).

The protein belongs to the UPF0381 family.

The chain is UPF0381 protein HI_0400 from Haemophilus influenzae (strain ATCC 51907 / DSM 11121 / KW20 / Rd).